The following is a 384-amino-acid chain: Probable L-tyrosine/L-aspartate decarboxylase (384 aa).

At Lys233 the chain carries N6-(pyridoxal phosphate)lysine.

This sequence belongs to the group II decarboxylase family. MfnA subfamily. The cofactor is pyridoxal 5'-phosphate.

It catalyses the reaction L-tyrosine + H(+) = tyramine + CO2. The enzyme catalyses L-aspartate + H(+) = beta-alanine + CO2. Its pathway is cofactor biosynthesis; methanofuran biosynthesis. It functions in the pathway cofactor biosynthesis; coenzyme A biosynthesis. Its function is as follows. Catalyzes the decarboxylation of L-tyrosine to produce tyramine for methanofuran biosynthesis. Can also catalyze the decarboxylation of L-aspartate to produce beta-alanine for coenzyme A (CoA) biosynthesis. This Methanococcus maripaludis (strain C5 / ATCC BAA-1333) protein is Probable L-tyrosine/L-aspartate decarboxylase.